A 238-amino-acid chain; its full sequence is tRNA (guanine-N(7)-)-methyltransferase (238 aa).

Glutamate 70, aspartate 95, aspartate 122, and aspartate 145 together coordinate S-adenosyl-L-methionine. The active site involves aspartate 145. Substrate is bound by residues lysine 149, aspartate 181, and 216–219 (TKFE).

This sequence belongs to the class I-like SAM-binding methyltransferase superfamily. TrmB family.

The catalysed reaction is guanosine(46) in tRNA + S-adenosyl-L-methionine = N(7)-methylguanosine(46) in tRNA + S-adenosyl-L-homocysteine. Its pathway is tRNA modification; N(7)-methylguanine-tRNA biosynthesis. Its function is as follows. Catalyzes the formation of N(7)-methylguanine at position 46 (m7G46) in tRNA. This chain is tRNA (guanine-N(7)-)-methyltransferase, found in Neisseria gonorrhoeae (strain ATCC 700825 / FA 1090).